A 546-amino-acid chain; its full sequence is Chaperonin GroEL (546 aa).

ATP is bound by residues 30 to 33 (TLGP), Lys51, 87 to 91 (DGTTT), Gly415, and Asp496. A disordered region spans residues 526 to 546 (PQKDAPAGGGMPDMGGMGGMM). Residues 532–546 (AGGGMPDMGGMGGMM) are compositionally biased toward gly residues.

Belongs to the chaperonin (HSP60) family. In terms of assembly, forms a cylinder of 14 subunits composed of two heptameric rings stacked back-to-back. Interacts with the co-chaperonin GroES.

Its subcellular location is the cytoplasm. The catalysed reaction is ATP + H2O + a folded polypeptide = ADP + phosphate + an unfolded polypeptide.. Its function is as follows. Together with its co-chaperonin GroES, plays an essential role in assisting protein folding. The GroEL-GroES system forms a nano-cage that allows encapsulation of the non-native substrate proteins and provides a physical environment optimized to promote and accelerate protein folding. This is Chaperonin GroEL from Ruegeria pomeroyi (strain ATCC 700808 / DSM 15171 / DSS-3) (Silicibacter pomeroyi).